The sequence spans 1551 residues: Dual oxidase 1 (1551 aa).

The signal sequence occupies residues 1–21; the sequence is MGFCLALAWTLLVGAWTPLGA. Topologically, residues 22-596 are extracellular; it reads QNPISWEVQR…YFEGSGFGFG (575 aa). A peroxidase-like; mediates peroxidase activity region spans residues 26-593; that stretch reads SWEVQRFDGW…VRDYFEGSGF (568 aa). Asn-94 is a glycosylation site (N-linked (GlcNAc...) asparagine). A disordered region spans residues 150–172; the sequence is RWDPETGRSPSNPRDPANQVTGW. Asn-342, Asn-354, Asn-461, and Asn-534 each carry an N-linked (GlcNAc...) asparagine glycan. A helical membrane pass occupies residues 597-617; it reads VTIGTLCCFPLVSLLSAWIVA. The Cytoplasmic segment spans residues 618–1044; it reads RLRMRNFKRL…KRFIENYRRH (427 aa). EF-hand domains follow at residues 815–850, 851–886, and 895–930; these read PQDMFVESMFSLADKDGNGYLSFREFLDILVVFMKG, SPEEKSRLMFRMYDFDGNGLISKDEFIRMLRSFIEI, and QLAEVVESMFRESGFQDKEELTWEDFHFMLRDHNSE. Ca(2+) contacts are provided by Asp-828, Asp-830, Asn-832, Tyr-834, Glu-839, Asp-864, Asp-866, Asn-868, and Glu-875. The tract at residues 956-1248 is interaction with TXNDC11; the sequence is YISQDMICPS…GSFALIQLPR (293 aa). A helical transmembrane segment spans residues 1045 to 1065; that stretch reads IGCVAVFYAIAGGLFLERAYY. Residues 1066 to 1080 are Extracellular-facing; that stretch reads YAFAAHHTGITDTTR. Residues 1081–1101 traverse the membrane as a helical segment; that stretch reads VGIILSRGTAASISFMFSYIL. Residues 1087–1269 form the Ferric oxidoreductase domain; that stretch reads RGTAASISFM…YGGDKLVSLS (183 aa). Residues 1102–1148 lie on the Cytoplasmic side of the membrane; that stretch reads LTMCRNLITFLRETFLNRYVPFDAAVDFHRLIASTAIVLTVLHSVGH. The helical transmembrane segment at 1149-1171 threads the bilayer; the sequence is VVNVYLFSISPLSVLSCLFPGLF. Topologically, residues 1172–1188 are extracellular; it reads HDDGSELPQKYYWWFFQ. Residues 1189–1209 form a helical membrane-spanning segment; sequence TVPGLTGVVLLLILAIMYVFA. The Cytoplasmic segment spans residues 1210–1226; sequence SHHFRRRSFRGFWLTHH. Residues 1227 to 1247 form a helical membrane-spanning segment; that stretch reads LYILLYVLLIIHGSFALIQLP. Arg-1248 is a topological domain (extracellular). Residues 1249–1269 traverse the membrane as a helical segment; it reads FHIFFLVPAIIYGGDKLVSLS. Residues 1270 to 1376 form the FAD-binding FR-type domain; the sequence is RKKVEISVVK…DGPFGEGHQE (107 aa). Topologically, residues 1270–1551 are cytoplasmic; it reads RKKVEISVVK…THFSHHYENF (282 aa).

It in the N-terminal section; belongs to the peroxidase family. As to quaternary structure, interacts with TXNDC11, TPO and CYBA. Post-translationally, N-glycosylated. Expressed in thyrocytes and tracheal surface epithelial cells (at protein level). Expressed in thyroid, trachea, bronchium, and to a lower extent, in placenta, testis, prostate, pancreas and heart.

Its subcellular location is the apical cell membrane. It catalyses the reaction NADH + O2 + H(+) = H2O2 + NAD(+). The enzyme catalyses NADPH + O2 + H(+) = H2O2 + NADP(+). The protein operates within hormone biosynthesis; thyroid hormone biosynthesis. With respect to regulation, the NADPH oxidase activity is calcium-dependent. Peroxidase activity is inhibited by aminobenzohydrazide. Functionally, generates hydrogen peroxide which is required for the activity of thyroid peroxidase/TPO and lactoperoxidase/LPO. Plays a role in thyroid hormones synthesis and lactoperoxidase-mediated antimicrobial defense at the surface of mucosa. May have its own peroxidase activity through its N-terminal peroxidase-like domain. In Homo sapiens (Human), this protein is Dual oxidase 1 (DUOX1).